The primary structure comprises 640 residues: Threonine--tRNA ligase (640 aa).

The TGS domain maps to 1–61 (MPIITLPNGD…TEDATLQIIT (61 aa)). Positions 242–533 (DHRKIGKALD…LIEHYAGFMP (292 aa)) are catalytic. Residues Cys-333, His-384, and His-510 each coordinate Zn(2+).

Belongs to the class-II aminoacyl-tRNA synthetase family. As to quaternary structure, homodimer. Requires Zn(2+) as cofactor.

Its subcellular location is the cytoplasm. It carries out the reaction tRNA(Thr) + L-threonine + ATP = L-threonyl-tRNA(Thr) + AMP + diphosphate + H(+). Catalyzes the attachment of threonine to tRNA(Thr) in a two-step reaction: L-threonine is first activated by ATP to form Thr-AMP and then transferred to the acceptor end of tRNA(Thr). Also edits incorrectly charged L-seryl-tRNA(Thr). This is Threonine--tRNA ligase from Acinetobacter baylyi (strain ATCC 33305 / BD413 / ADP1).